A 61-amino-acid polypeptide reads, in one-letter code: Small ribosomal subunit protein uS14 (61 aa).

Zn(2+)-binding residues include Cys24, Cys27, Cys40, and Cys43.

This sequence belongs to the universal ribosomal protein uS14 family. Zinc-binding uS14 subfamily. Part of the 30S ribosomal subunit. Contacts proteins S3 and S10. It depends on Zn(2+) as a cofactor.

Functionally, binds 16S rRNA, required for the assembly of 30S particles and may also be responsible for determining the conformation of the 16S rRNA at the A site. This Treponema pallidum (strain Nichols) protein is Small ribosomal subunit protein uS14.